The following is a 303-amino-acid chain: uncharacterized protein (303 aa).

4 helical membrane passes run 102 to 122 (TYLL…VMAI), 132 to 152 (FVLF…FLFF), 184 to 204 (LLYF…SLIY), and 221 to 241 (FILL…FLLF).

The protein resides in the membrane. This is an uncharacterized protein from Dictyostelium discoideum (Social amoeba).